Reading from the N-terminus, the 35-residue chain is ANNFDLMYEQVKFYGEVTQQMLKVSVLEMDGQFDR.

The protein belongs to the phosphoribulokinase family.

It localises to the plastid. The protein localises to the chloroplast. It carries out the reaction D-ribulose 5-phosphate + ATP = D-ribulose 1,5-bisphosphate + ADP + H(+). Its pathway is carbohydrate biosynthesis; Calvin cycle. Light regulated via thioredoxin by reversible oxidation/reduction of sulfhydryl/disulfide groups. The protein is Phosphoribulokinase of Pinus pinaster (Maritime pine).